Consider the following 135-residue polypeptide: Putative hydrolase EbsB (135 aa).

Residues 1–128 (MLRIYVDAAT…ADMLARQALQ (128 aa)) enclose the RNase H type-1 domain. Residues D7, E45, D71, and D120 each coordinate Mg(2+).

This sequence belongs to the RNase H family. EbsB subfamily. Mg(2+) is required as a cofactor.

The protein resides in the secreted. Its subcellular location is the cell wall. In terms of biological role, seems to play some role in the cell surface expression of a chromosomally encoded receptor, named enterococcal binding substance (EBS), that mediates mating aggregate formation. Might interfere with the synthesis or assembly of EBS and function as a cell wall hydrolase. This is Putative hydrolase EbsB from Enterococcus faecalis (strain ATCC 700802 / V583).